The primary structure comprises 197 residues: MSRYRGPRFKKIRRLGALPGLTNKSPRAIRDLRNQSRSEYRIRLEEKQKLRFHYGLTEKQLINYVRIARKAKGSTGKVLLQLLEMRLDNILFRLGMASTIPAARQLVNHRHVLVNGRLVDRPSYRCKPRDIIMPKNTTKSGVLVQNSLQLFTGKELATHLNLFSTPYKGLVNKIVDTNWIGLKINELLVVEYYSRQT.

The S4 RNA-binding domain occupies 85–157 (MRLDNILFRL…LQLFTGKELA (73 aa)).

This sequence belongs to the universal ribosomal protein uS4 family. As to quaternary structure, part of the 30S ribosomal subunit. Contacts protein S5. The interaction surface between S4 and S5 is involved in control of translational fidelity.

It localises to the plastid. In terms of biological role, one of the primary rRNA binding proteins, it binds directly to 16S rRNA where it nucleates assembly of the body of the 30S subunit. Functionally, with S5 and S12 plays an important role in translational accuracy. In Cuscuta gronovii (Common dodder), this protein is Small ribosomal subunit protein uS4c (rps4).